Here is a 282-residue protein sequence, read N- to C-terminus: NH(3)-dependent NAD(+) synthetase (282 aa).

51–58 (GISGGVDS) is a binding site for ATP. Position 57 (Asp-57) interacts with Mg(2+). Arg-148 contacts deamido-NAD(+). Thr-168 is an ATP binding site. Glu-173 provides a ligand contact to Mg(2+). Lys-181 and Asp-188 together coordinate deamido-NAD(+). ATP contacts are provided by Lys-197 and Thr-219. 268–269 (HK) provides a ligand contact to deamido-NAD(+).

This sequence belongs to the NAD synthetase family. Homodimer.

The enzyme catalyses deamido-NAD(+) + NH4(+) + ATP = AMP + diphosphate + NAD(+) + H(+). The protein operates within cofactor biosynthesis; NAD(+) biosynthesis; NAD(+) from deamido-NAD(+) (ammonia route): step 1/1. Functionally, catalyzes the ATP-dependent amidation of deamido-NAD to form NAD. Uses ammonia as a nitrogen source. This chain is NH(3)-dependent NAD(+) synthetase, found in Burkholderia cenocepacia (strain ATCC BAA-245 / DSM 16553 / LMG 16656 / NCTC 13227 / J2315 / CF5610) (Burkholderia cepacia (strain J2315)).